Reading from the N-terminus, the 253-residue chain is Ubiquinone/menaquinone biosynthesis C-methyltransferase UbiE (253 aa).

Residues threonine 76, aspartate 97, and 125–126 (NA) contribute to the S-adenosyl-L-methionine site.

It belongs to the class I-like SAM-binding methyltransferase superfamily. MenG/UbiE family.

The enzyme catalyses a 2-demethylmenaquinol + S-adenosyl-L-methionine = a menaquinol + S-adenosyl-L-homocysteine + H(+). The catalysed reaction is a 2-methoxy-6-(all-trans-polyprenyl)benzene-1,4-diol + S-adenosyl-L-methionine = a 5-methoxy-2-methyl-3-(all-trans-polyprenyl)benzene-1,4-diol + S-adenosyl-L-homocysteine + H(+). It functions in the pathway quinol/quinone metabolism; menaquinone biosynthesis; menaquinol from 1,4-dihydroxy-2-naphthoate: step 2/2. It participates in cofactor biosynthesis; ubiquinone biosynthesis. In terms of biological role, methyltransferase required for the conversion of demethylmenaquinol (DMKH2) to menaquinol (MKH2) and the conversion of 2-polyprenyl-6-methoxy-1,4-benzoquinol (DDMQH2) to 2-polyprenyl-3-methyl-6-methoxy-1,4-benzoquinol (DMQH2). The chain is Ubiquinone/menaquinone biosynthesis C-methyltransferase UbiE from Rhodopseudomonas palustris (strain HaA2).